An 863-amino-acid polypeptide reads, in one-letter code: MASDFSTGLHGGHHETLEQYNKVLEELAADAVMDPFRVEYEKLHRALRKTYESQARLAKKCQELNSDISLNASKVQSALKLNEEDRETAVALKREINKAWKMVDDSTVKETKAKETAQQLKVEIANLSRLVEEGAGLAIGEETALNELLKQKEELARERDAQVEQLMKYRSDLMETQEKLRAADAEKLQLDADIQHLRGTINDKKAEAEREIRKKERMEKEMKELRQQLEIRSSEIKSKQLQVTSTEEQVARLEQMLRDAKFATEKVQKEYNMLNERMQKLHHDLEEQIHTNTQLLTENSAKQVELRVKEEEISGIKQEASRVNKLREQTVKKTKQLEEQRVEVEKERDVLRAELAALERELEAKQKEVDVEKKKLEELTRERDAENATQKQIDLVKINENAKRNLEQEIQGYKMEAQKQSKLIYQLEKEREKYDLEAAEAANKYQQAQSEVKLRVDAIMDLQRRIAEGESKLKQQQNLYEAVRADRNLYSKNLIEAQDEIQEMKRKFKIMQHQIEQLKEEITGKDLYLLKEHFEHQKVINEKEQLRNELDRSKSNIKEADSAINAQKVEIDKLNHIINEADQERRRQKKEYDIVVNERDILGTQLVRRNDELAALYERIKIQQATLQMGQSQYRDRLAEIRQLKVRLADLKRQLHLLKSSVSNIDVLKREVHQLGRELLQERTKVKALSEELENPLNVHRWRKLEGSDPGTYEMIQKIQTLQKRLISKTEEVVEKDLLIQEKEKLYMELKNILARQPGPEVAEQLSIYQANLREKTKQMKAMASELNMYQAQVNEYKYEIERLVRELNEMKQVFFDRRKKEQADRARTMKASMYGPSLLDQLPGGSGTGSGGMATGGGVGMS.

2 coiled-coil regions span residues 107–600 (TVKE…NERD) and 631–815 (QSQY…KQVF). The disordered stretch occupies residues 836 to 863 (GPSLLDQLPGGSGTGSGGMATGGGVGMS). The span at 845-863 (GGSGTGSGGMATGGGVGMS) shows a compositional bias: gly residues.

This sequence belongs to the CFAP58 family.

It is found in the cell projection. The protein resides in the cilium. The protein localises to the flagellum. The polypeptide is Cilia- and flagella-associated protein 58 (Chlamydomonas reinhardtii (Chlamydomonas smithii)).